The primary structure comprises 269 residues: Glutamate racemase (269 aa).

Substrate is bound by residues 7–8 (DS) and 39–40 (YG). Cysteine 70 serves as the catalytic Proton donor/acceptor. 71 to 72 (NT) is a binding site for substrate. Catalysis depends on cysteine 194, which acts as the Proton donor/acceptor. 195–196 (TH) is a substrate binding site.

It belongs to the aspartate/glutamate racemases family.

The catalysed reaction is L-glutamate = D-glutamate. It participates in cell wall biogenesis; peptidoglycan biosynthesis. Provides the (R)-glutamate required for cell wall biosynthesis. The chain is Glutamate racemase from Ruegeria pomeroyi (strain ATCC 700808 / DSM 15171 / DSS-3) (Silicibacter pomeroyi).